Consider the following 411-residue polypeptide: Serine hydroxymethyltransferase (411 aa).

(6S)-5,6,7,8-tetrahydrofolate is bound by residues leucine 113 and glycine 117–leucine 119. Lysine 222 carries the post-translational modification N6-(pyridoxal phosphate)lysine. A (6S)-5,6,7,8-tetrahydrofolate-binding site is contributed by serine 346–phenylalanine 348.

It belongs to the SHMT family. As to quaternary structure, homodimer. Pyridoxal 5'-phosphate serves as cofactor.

It localises to the cytoplasm. The catalysed reaction is (6R)-5,10-methylene-5,6,7,8-tetrahydrofolate + glycine + H2O = (6S)-5,6,7,8-tetrahydrofolate + L-serine. It functions in the pathway one-carbon metabolism; tetrahydrofolate interconversion. The protein operates within amino-acid biosynthesis; glycine biosynthesis; glycine from L-serine: step 1/1. Functionally, catalyzes the reversible interconversion of serine and glycine with tetrahydrofolate (THF) serving as the one-carbon carrier. This reaction serves as the major source of one-carbon groups required for the biosynthesis of purines, thymidylate, methionine, and other important biomolecules. Also exhibits THF-independent aldolase activity toward beta-hydroxyamino acids, producing glycine and aldehydes, via a retro-aldol mechanism. This chain is Serine hydroxymethyltransferase, found in Prochlorococcus marinus (strain NATL2A).